The chain runs to 433 residues: Histidine--tRNA ligase (433 aa).

The protein belongs to the class-II aminoacyl-tRNA synthetase family. Homodimer.

The protein localises to the cytoplasm. It carries out the reaction tRNA(His) + L-histidine + ATP = L-histidyl-tRNA(His) + AMP + diphosphate + H(+). This Pseudothermotoga lettingae (strain ATCC BAA-301 / DSM 14385 / NBRC 107922 / TMO) (Thermotoga lettingae) protein is Histidine--tRNA ligase.